The primary structure comprises 327 residues: Ribosomal RNA large subunit methyltransferase F (327 aa).

The protein belongs to the methyltransferase superfamily. METTL16/RlmF family.

It localises to the cytoplasm. The catalysed reaction is adenosine(1618) in 23S rRNA + S-adenosyl-L-methionine = N(6)-methyladenosine(1618) in 23S rRNA + S-adenosyl-L-homocysteine + H(+). In terms of biological role, specifically methylates the adenine in position 1618 of 23S rRNA. The protein is Ribosomal RNA large subunit methyltransferase F of Marinomonas sp. (strain MWYL1).